The primary structure comprises 589 residues: Kelch-like protein diablo (589 aa).

A disordered region spans residues 1–22; that stretch reads MGDVLISDRPPSPARLSHTSEK. The region spanning 41–108 is the BTB domain; the sequence is CDVVINVSGR…CYTSHIVVEE (68 aa). In terms of domain architecture, BACK spans 143–245; that stretch reads CLGIRAFADT…SPKFLVGTVG (103 aa). Kelch repeat units lie at residues 292–338, 340–386, 387–433, 435–480, 482–527, and 528–574; these read VLFA…VLND, LYAV…VLDG, FLYA…VLGG, LYAI…VFNN, IYAV…VVNG, and QLYA…VMRA.

It functions in the pathway protein modification; protein ubiquitination. In terms of biological role, probable substrate-specific adapter of an E3 ubiquitin-protein ligase complex which mediates the ubiquitination and subsequent proteasomal degradation of target proteins. May have a role in synapse differentiation and growth. This is Kelch-like protein diablo from Aedes aegypti (Yellowfever mosquito).